A 341-amino-acid polypeptide reads, in one-letter code: S-adenosylmethionine:tRNA ribosyltransferase-isomerase (341 aa).

The protein belongs to the QueA family. Monomer.

Its subcellular location is the cytoplasm. The enzyme catalyses 7-aminomethyl-7-carbaguanosine(34) in tRNA + S-adenosyl-L-methionine = epoxyqueuosine(34) in tRNA + adenine + L-methionine + 2 H(+). The protein operates within tRNA modification; tRNA-queuosine biosynthesis. Its function is as follows. Transfers and isomerizes the ribose moiety from AdoMet to the 7-aminomethyl group of 7-deazaguanine (preQ1-tRNA) to give epoxyqueuosine (oQ-tRNA). This is S-adenosylmethionine:tRNA ribosyltransferase-isomerase from Chlorobium phaeobacteroides (strain DSM 266 / SMG 266 / 2430).